The sequence spans 136 residues: 5-hydroxyisourate hydrolase (136 aa).

The N-terminal stretch at 1 to 20 (MKRYILATVIASLVAAPAMA) is a signal peptide. Substrate contacts are provided by histidine 31, arginine 69, and tyrosine 133.

The protein belongs to the transthyretin family. 5-hydroxyisourate hydrolase subfamily. As to quaternary structure, homotetramer.

The protein resides in the periplasm. The enzyme catalyses 5-hydroxyisourate + H2O = 5-hydroxy-2-oxo-4-ureido-2,5-dihydro-1H-imidazole-5-carboxylate + H(+). Its function is as follows. Catalyzes the hydrolysis of 5-hydroxyisourate (HIU) to 2-oxo-4-hydroxy-4-carboxy-5-ureidoimidazoline (OHCU). The polypeptide is 5-hydroxyisourate hydrolase (hiuH) (Salmonella typhimurium (strain LT2 / SGSC1412 / ATCC 700720)).